The chain runs to 172 residues: Large ribosomal subunit protein uL10 (172 aa).

Belongs to the universal ribosomal protein uL10 family. As to quaternary structure, part of the ribosomal stalk of the 50S ribosomal subunit. The N-terminus interacts with L11 and the large rRNA to form the base of the stalk. The C-terminus forms an elongated spine to which L12 dimers bind in a sequential fashion forming a multimeric L10(L12)X complex.

In terms of biological role, forms part of the ribosomal stalk, playing a central role in the interaction of the ribosome with GTP-bound translation factors. The protein is Large ribosomal subunit protein uL10 of Pelodictyon phaeoclathratiforme (strain DSM 5477 / BU-1).